A 107-amino-acid polypeptide reads, in one-letter code: Metallothionein-1 (107 aa).

A propeptide spanning residues 1 to 2 is cleaved from the precursor; that stretch reads MD.

It belongs to the metallothionein superfamily. Type 7 family.

The metallothioneins are involved in the cellular sequestration of toxic metal ions. Binds 12 cadmium ions per molecule. This is Metallothionein-1 from Tetrahymena pigmentosa.